The sequence spans 192 residues: CASP-like protein 4C1 (192 aa).

Polar residues predominate over residues 1–11 (MRSPQSLRNGE). Residues 1–23 (MRSPQSLRNGETPSPSPRPPRFP) are disordered. Residues 1–40 (MRSPQSLRNGETPSPSPRPPRFPTPHFHSTVSLQKLKRFN) are Cytoplasmic-facing. Residues 14–23 (SPSPRPPRFP) are compositionally biased toward pro residues. Residues 41–61 (LLILVFRLSTFCFSLASSVFM) traverse the membrane as a helical segment. Residues 62–75 (LTNPTWYHFDAFRY) lie on the Extracellular side of the membrane. A helical membrane pass occupies residues 76–96 (VFAANAIVAIYSLFEMAASVW). Over 97 to 107 (EISRGNTLFPE) the chain is Cytoplasmic. Residues 108–128 (ILQVWFDFGHDQVFAYLLLSA) form a helical membrane-spanning segment. At 129–156 (DSAATALAKTLKGGDTCAASNAFCVQSY) the chain is on the extracellular side. The helical transmembrane segment at 157–177 (IAIALGFAGFLFLGLSSLLSG) threads the bilayer. Topologically, residues 178–192 (FRVVCFLINGSRFYV) are cytoplasmic.

The protein belongs to the Casparian strip membrane proteins (CASP) family. As to quaternary structure, homodimer and heterodimers.

The protein localises to the cell membrane. The chain is CASP-like protein 4C1 from Ricinus communis (Castor bean).